Reading from the N-terminus, the 418-residue chain is Mitochondrial distribution and morphology protein 10 (418 aa).

It belongs to the MDM10 family. Component of the ER-mitochondria encounter structure (ERMES) or MDM complex, composed of MMM1, MDM10, MDM12 and MDM34. Associates with the mitochondrial outer membrane sorting assembly machinery SAM(core) complex.

Its subcellular location is the mitochondrion outer membrane. In terms of biological role, component of the ERMES/MDM complex, which serves as a molecular tether to connect the endoplasmic reticulum and mitochondria. Components of this complex are involved in the control of mitochondrial shape and protein biogenesis and may function in phospholipid exchange. MDM10 is involved in the late assembly steps of the general translocase of the mitochondrial outer membrane (TOM complex). Functions in the TOM40-specific route of the assembly of outer membrane beta-barrel proteins, including the association of TOM40 with the receptor TOM22 and small TOM proteins. Can associate with the SAM(core) complex as well as the MDM12-MMM1 complex, both involved in late steps of the major beta-barrel assembly pathway, that is responsible for biogenesis of all outer membrane beta-barrel proteins. May act as a switch that shuttles between both complexes and channels precursor proteins into the TOM40-specific pathway. Plays a role in mitochondrial morphology and in the inheritance of mitochondria. The polypeptide is Mitochondrial distribution and morphology protein 10 (Meyerozyma guilliermondii (strain ATCC 6260 / CBS 566 / DSM 6381 / JCM 1539 / NBRC 10279 / NRRL Y-324) (Yeast)).